A 257-amino-acid chain; its full sequence is Putative hydro-lyase Bcenmc03_3969 (257 aa).

It belongs to the D-glutamate cyclase family.

The polypeptide is Putative hydro-lyase Bcenmc03_3969 (Burkholderia orbicola (strain MC0-3)).